We begin with the raw amino-acid sequence, 1018 residues long: Pleckstrin homology domain-containing family M member 2 (1018 aa).

Residue Met1 is modified to N-acetylmethionine. Positions 1–289 (MEPREVKDRI…PDQPDACTEL (289 aa)) are interaction with KIF5B. Residues 36-158 (RNHDKVLQRL…IRFDLDLDAP (123 aa)) form the RUN domain. 5 disordered regions span residues 210-367 (SAIA…SSEL), 407-440 (TWCS…SEGL), 452-520 (ESPS…DSQL), 526-545 (EPLV…EPGT), and 555-583 (DQPS…THPS). Over residues 230–245 (STASDLTSSKTSTKSP) the composition is skewed to low complexity. Positions 258–270 (ETASSDTTPVHTT) are enriched in polar residues. The segment covering 294–306 (VTKKKKIGKKKKT) has biased composition (basic residues). Polar residues-rich tracts occupy residues 316–325 (HPTSSQQKCG) and 347–367 (VLAS…SSEL). A Phosphoserine modification is found at Ser423. Residues 770 to 872 (TITKEGMLHY…WMQHLCQAVS (103 aa)) enclose the PH domain.

As to quaternary structure, interacts with KLC2 (via TPR repeats). Interacts with KIF5B. Interacts with BORCS5. Interacts (via RUN domain) with ARL8B (GTP-bound form); PLEKHM1 and PLEKHM2 compete for interaction with ARL8B. Interacts with ARL8A.

It localises to the cytoplasm. The protein resides in the lysosome membrane. In terms of biological role, plays a role in lysosomes movement and localization at the cell periphery acting as an effector of ARL8B. Required for ARL8B to exert its effects on lysosome location, recruits kinesin-1 to lysosomes and hence direct their movement toward microtubule plus ends. Binding to ARL8B provides a link from lysosomal membranes to plus-end-directed motility. Critical factor involved in NK cell-mediated cytotoxicity. Drives the polarization of cytolytic granules and microtubule-organizing centers (MTOCs) toward the immune synapse between effector NK lymphocytes and target cells. Required for maintenance of the Golgi apparatus organization. May play a role in membrane tubulation. This chain is Pleckstrin homology domain-containing family M member 2, found in Mus musculus (Mouse).